A 289-amino-acid chain; its full sequence is Ribonuclease H2 subunit A (289 aa).

Residues 20-249 (PFVMGIDEAG…TETAMRGACF (230 aa)) form the RNase H type-2 domain. Aspartate 26, glutamate 27, and aspartate 134 together coordinate a divalent metal cation.

It belongs to the RNase HII family. Eukaryotic subfamily. It depends on Mn(2+) as a cofactor. The cofactor is Mg(2+).

It carries out the reaction Endonucleolytic cleavage to 5'-phosphomonoester.. Functionally, endonuclease that specifically degrades the RNA of RNA-DNA hybrids. Participates in DNA replication. The sequence is that of Ribonuclease H2 subunit A (rnaseh2A) from Dictyostelium discoideum (Social amoeba).